The chain runs to 393 residues: MQFDNIDSALMALKNGEPIIVVDDENRENEGDLVAVTEWMNDNTINFMAKEARGLICAPVSKDIAQRLDLVQMVDDNSDIFGTQFTVSIDHVDTTTGISAYERTLTAKKLIDPSSEAKDFNRPGHLFPLVAQDKGVLARNGHTEAAVDLAKLTGAKPAGVICEIMNDDGTMAKGQDLQKFKEKHQLKMITIDDLIEYRKKLEPEIEFKAKVKMPTDFGTFDMYGFKATYTDEEIVVLTKGAIRQHENVRLHSACLTGDIFHSQRCDCGAQLESSMKYINEHGGMIIYLPQEGRGIGLLNKLRAYELIEQGYDTVTANLALGFDEDLRDYHIAAQILKYFNIEHINLLSNNPSKFEGLKQYGIDIAERIEVIVPETVHNHDYMETKKIKMGHLI.

The interval 1-200 is DHBP synthase; it reads MQFDNIDSAL…IDDLIEYRKK (200 aa). D-ribulose 5-phosphate contacts are provided by residues 27 to 28, aspartate 32, 139 to 143, and glutamate 163; these read RE and RNGHT. Position 28 (glutamate 28) interacts with Mg(2+). Histidine 142 is a Mg(2+) binding site. Residues 201 to 393 are GTP cyclohydrolase II; it reads LEPEIEFKAK…TKKIKMGHLI (193 aa). 249–253 serves as a coordination point for GTP; sequence RLHSA. The Zn(2+) site is built by cysteine 254, cysteine 265, and cysteine 267. GTP contacts are provided by residues glutamine 270, 291-293, and threonine 313; that span reads EGR. Aspartate 325 serves as the catalytic Proton acceptor; for GTP cyclohydrolase activity. The active-site Nucleophile; for GTP cyclohydrolase activity is the arginine 327. GTP contacts are provided by serine 348 and lysine 353.

This sequence in the N-terminal section; belongs to the DHBP synthase family. The protein in the C-terminal section; belongs to the GTP cyclohydrolase II family. Mg(2+) serves as cofactor. Requires Mn(2+) as cofactor. Zn(2+) is required as a cofactor.

It carries out the reaction D-ribulose 5-phosphate = (2S)-2-hydroxy-3-oxobutyl phosphate + formate + H(+). The catalysed reaction is GTP + 4 H2O = 2,5-diamino-6-hydroxy-4-(5-phosphoribosylamino)-pyrimidine + formate + 2 phosphate + 3 H(+). Its pathway is cofactor biosynthesis; riboflavin biosynthesis; 2-hydroxy-3-oxobutyl phosphate from D-ribulose 5-phosphate: step 1/1. It functions in the pathway cofactor biosynthesis; riboflavin biosynthesis; 5-amino-6-(D-ribitylamino)uracil from GTP: step 1/4. Functionally, catalyzes the conversion of D-ribulose 5-phosphate to formate and 3,4-dihydroxy-2-butanone 4-phosphate. Catalyzes the conversion of GTP to 2,5-diamino-6-ribosylamino-4(3H)-pyrimidinone 5'-phosphate (DARP), formate and pyrophosphate. The polypeptide is Riboflavin biosynthesis protein RibBA (Staphylococcus aureus (strain COL)).